Consider the following 200-residue polypeptide: Holliday junction branch migration complex subunit RuvA (200 aa).

Positions 1 to 63 (MYAYVKGKLT…EDAQLLYGFS (63 aa)) are domain I. The domain II stretch occupies residues 64-142 (SEEEKDMFLS…ITEEDSDSLL (79 aa)). Residues 143–149 (QVDATST) form a flexible linker region. Residues 150-200 (EQDQFVQEAMLALEALGYSKRELAKVEKTLNKNKYDSVDEAVKAGLQLVVS) form a domain III region.

Belongs to the RuvA family. As to quaternary structure, homotetramer. Forms an RuvA(8)-RuvB(12)-Holliday junction (HJ) complex. HJ DNA is sandwiched between 2 RuvA tetramers; dsDNA enters through RuvA and exits via RuvB. An RuvB hexamer assembles on each DNA strand where it exits the tetramer. Each RuvB hexamer is contacted by two RuvA subunits (via domain III) on 2 adjacent RuvB subunits; this complex drives branch migration. In the full resolvosome a probable DNA-RuvA(4)-RuvB(12)-RuvC(2) complex forms which resolves the HJ.

It is found in the cytoplasm. Functionally, the RuvA-RuvB-RuvC complex processes Holliday junction (HJ) DNA during genetic recombination and DNA repair, while the RuvA-RuvB complex plays an important role in the rescue of blocked DNA replication forks via replication fork reversal (RFR). RuvA specifically binds to HJ cruciform DNA, conferring on it an open structure. The RuvB hexamer acts as an ATP-dependent pump, pulling dsDNA into and through the RuvAB complex. HJ branch migration allows RuvC to scan DNA until it finds its consensus sequence, where it cleaves and resolves the cruciform DNA. The chain is Holliday junction branch migration complex subunit RuvA from Staphylococcus aureus (strain MRSA252).